We begin with the raw amino-acid sequence, 326 residues long: Biotin synthase (326 aa).

A Radical SAM core domain is found at 42-266; that stretch reads NEIQLAALLN…LMPKSYVRLA (225 aa). 3 residues coordinate [4Fe-4S] cluster: cysteine 57, cysteine 61, and cysteine 64. Cysteine 101, cysteine 132, cysteine 192, and arginine 264 together coordinate [2Fe-2S] cluster.

This sequence belongs to the radical SAM superfamily. Biotin synthase family. In terms of assembly, homodimer. Requires [4Fe-4S] cluster as cofactor. It depends on [2Fe-2S] cluster as a cofactor.

The catalysed reaction is (4R,5S)-dethiobiotin + (sulfur carrier)-SH + 2 reduced [2Fe-2S]-[ferredoxin] + 2 S-adenosyl-L-methionine = (sulfur carrier)-H + biotin + 2 5'-deoxyadenosine + 2 L-methionine + 2 oxidized [2Fe-2S]-[ferredoxin]. It functions in the pathway cofactor biosynthesis; biotin biosynthesis; biotin from 7,8-diaminononanoate: step 2/2. Its function is as follows. Catalyzes the conversion of dethiobiotin (DTB) to biotin by the insertion of a sulfur atom into dethiobiotin via a radical-based mechanism. The sequence is that of Biotin synthase from Ehrlichia chaffeensis (strain ATCC CRL-10679 / Arkansas).